The sequence spans 127 residues: UPF0325 protein VIBHAR_03240 (127 aa).

This sequence belongs to the UPF0325 family.

This is UPF0325 protein VIBHAR_03240 from Vibrio campbellii (strain ATCC BAA-1116).